Reading from the N-terminus, the 639-residue chain is Extracellular metalloproteinase 1 (639 aa).

A signal peptide spans 1 to 19 (MHGLLLAAGLISLPLHVLA). A propeptide spanning residues 20–250 (HPQPSSTSLA…VHNVVDYVAH (231 aa)) is cleaved from the precursor. Asn-291 carries N-linked (GlcNAc...) asparagine glycosylation. His-434 contributes to the Zn(2+) binding site. Residue Glu-435 is part of the active site. A Zn(2+)-binding site is contributed by His-438. An N-linked (GlcNAc...) asparagine glycan is attached at Asn-598.

It belongs to the peptidase M36 family. Zn(2+) is required as a cofactor.

The protein localises to the secreted. In terms of biological role, secreted metalloproteinase probably acting as a virulence factor. This is Extracellular metalloproteinase 1 (MEP1) from Arthroderma otae (strain ATCC MYA-4605 / CBS 113480) (Microsporum canis).